A 531-amino-acid polypeptide reads, in one-letter code: CTP synthase (531 aa).

Residues methionine 1–leucine 267 form an amidoligase domain region. Serine 13 serves as a coordination point for CTP. Position 13 (serine 13) interacts with UTP. Serine 14–isoleucine 19 provides a ligand contact to ATP. Tyrosine 54 contributes to the L-glutamine binding site. Aspartate 71 contacts ATP. Residues aspartate 71 and glutamate 141 each contribute to the Mg(2+) site. Residues aspartate 148–glutamate 150, lysine 188–glutamine 193, and lysine 224 each bind CTP. Residues lysine 188–glutamine 193 and lysine 224 contribute to the UTP site. Arginine 240 to alanine 242 is a binding site for ATP. Positions lysine 292–glutamate 531 constitute a Glutamine amidotransferase type-1 domain. Glycine 354 contributes to the L-glutamine binding site. Cysteine 381 acts as the Nucleophile; for glutamine hydrolysis in catalysis. L-glutamine-binding positions include leucine 382–glutamine 385, glutamate 405, and arginine 462. Residues histidine 507 and glutamate 509 contribute to the active site.

The protein belongs to the CTP synthase family. As to quaternary structure, homotetramer.

It catalyses the reaction UTP + L-glutamine + ATP + H2O = CTP + L-glutamate + ADP + phosphate + 2 H(+). The enzyme catalyses L-glutamine + H2O = L-glutamate + NH4(+). It carries out the reaction UTP + NH4(+) + ATP = CTP + ADP + phosphate + 2 H(+). The protein operates within pyrimidine metabolism; CTP biosynthesis via de novo pathway; CTP from UDP: step 2/2. Its activity is regulated as follows. Allosterically activated by GTP, when glutamine is the substrate; GTP has no effect on the reaction when ammonia is the substrate. The allosteric effector GTP functions by stabilizing the protein conformation that binds the tetrahedral intermediate(s) formed during glutamine hydrolysis. Inhibited by the product CTP, via allosteric rather than competitive inhibition. Functionally, catalyzes the ATP-dependent amination of UTP to CTP with either L-glutamine or ammonia as the source of nitrogen. Regulates intracellular CTP levels through interactions with the four ribonucleotide triphosphates. This Geobacillus kaustophilus (strain HTA426) protein is CTP synthase.